The chain runs to 86 residues: NAD(P)H-quinone oxidoreductase subunit O (86 aa).

The protein belongs to the complex I NdhO subunit family. As to quaternary structure, NDH-1 can be composed of about 15 different subunits; different subcomplexes with different compositions have been identified which probably have different functions.

The protein localises to the cellular thylakoid membrane. It carries out the reaction a plastoquinone + NADH + (n+1) H(+)(in) = a plastoquinol + NAD(+) + n H(+)(out). It catalyses the reaction a plastoquinone + NADPH + (n+1) H(+)(in) = a plastoquinol + NADP(+) + n H(+)(out). Its function is as follows. NDH-1 shuttles electrons from an unknown electron donor, via FMN and iron-sulfur (Fe-S) centers, to quinones in the respiratory and/or the photosynthetic chain. The immediate electron acceptor for the enzyme in this species is believed to be plastoquinone. Couples the redox reaction to proton translocation, and thus conserves the redox energy in a proton gradient. Cyanobacterial NDH-1 also plays a role in inorganic carbon-concentration. The protein is NAD(P)H-quinone oxidoreductase subunit O of Prochlorococcus marinus (strain SARG / CCMP1375 / SS120).